The following is a 72-amino-acid chain: Translation initiation factor IF-1 (72 aa).

The 72-residue stretch at 1-72 (MSKSDIIEMQ…TRGRITWRAK (72 aa)) folds into the S1-like domain.

It belongs to the IF-1 family. In terms of assembly, component of the 30S ribosomal translation pre-initiation complex which assembles on the 30S ribosome in the order IF-2 and IF-3, IF-1 and N-formylmethionyl-tRNA(fMet); mRNA recruitment can occur at any time during PIC assembly.

Its subcellular location is the cytoplasm. In terms of biological role, one of the essential components for the initiation of protein synthesis. Stabilizes the binding of IF-2 and IF-3 on the 30S subunit to which N-formylmethionyl-tRNA(fMet) subsequently binds. Helps modulate mRNA selection, yielding the 30S pre-initiation complex (PIC). Upon addition of the 50S ribosomal subunit IF-1, IF-2 and IF-3 are released leaving the mature 70S translation initiation complex. This is Translation initiation factor IF-1 from Clostridium perfringens (strain 13 / Type A).